Reading from the N-terminus, the 101-residue chain is Small ribosomal subunit protein bS18c (101 aa).

Positions 1–19 are enriched in basic residues; sequence MDKSKRPFRKSKRSFRKRL. Residues 1–23 are disordered; that stretch reads MDKSKRPFRKSKRSFRKRLPPIG.

Belongs to the bacterial ribosomal protein bS18 family. As to quaternary structure, part of the 30S ribosomal subunit.

It localises to the plastid. Its subcellular location is the chloroplast. This Chloranthus spicatus (Chulantree) protein is Small ribosomal subunit protein bS18c.